A 490-amino-acid polypeptide reads, in one-letter code: Betaine aldehyde dehydrogenase (490 aa).

2 residues coordinate K(+): Thr-26 and Asp-93. 150 to 152 contacts NAD(+); the sequence is GAW. Lys-162 acts as the Charge relay system in catalysis. Residue 176 to 179 participates in NAD(+) binding; the sequence is KPSE. Val-180 is a binding site for K(+). NAD(+) is bound at residue 230–233; that stretch reads GVAT. K(+) is bound at residue Leu-246. Glu-252 functions as the Proton acceptor in the catalytic mechanism. NAD(+)-binding residues include Gly-254, Cys-286, and Glu-387. Catalysis depends on Cys-286, which acts as the Nucleophile. At Cys-286 the chain carries Cysteine sulfenic acid (-SOH). Positions 457 and 460 each coordinate K(+). The active-site Charge relay system is the Glu-464.

Belongs to the aldehyde dehydrogenase family. In terms of assembly, dimer of dimers. K(+) serves as cofactor.

The enzyme catalyses betaine aldehyde + NAD(+) + H2O = glycine betaine + NADH + 2 H(+). It participates in amine and polyamine biosynthesis; betaine biosynthesis via choline pathway; betaine from betaine aldehyde: step 1/1. Its function is as follows. Involved in the biosynthesis of the osmoprotectant glycine betaine. Catalyzes the irreversible oxidation of betaine aldehyde to the corresponding acid. The polypeptide is Betaine aldehyde dehydrogenase (Stenotrophomonas maltophilia (strain R551-3)).